The chain runs to 231 residues: Superoxide dismutase [Mn], mitochondrial (231 aa).

A mitochondrion-targeting transit peptide spans 1–27 (MALRTLASRKTLAAAALPLAAAAAARG). His55, His103, Asp192, and His196 together coordinate Mn(2+).

Belongs to the iron/manganese superoxide dismutase family. In terms of assembly, homotetramer. Requires Mn(2+) as cofactor.

The protein localises to the mitochondrion matrix. The enzyme catalyses 2 superoxide + 2 H(+) = H2O2 + O2. Its function is as follows. Destroys superoxide anion radicals which are normally produced within the cells and which are toxic to biological systems. The protein is Superoxide dismutase [Mn], mitochondrial (SODA) of Oryza sativa subsp. japonica (Rice).